The primary structure comprises 232 residues: 5'-methylthioadenosine/S-adenosylhomocysteine nucleosidase (232 aa).

The active-site Proton acceptor is the Glu12. Residues Gly78, Ile152, and 173–174 (ME) each bind substrate. Catalysis depends on Asp197, which acts as the Proton donor.

It belongs to the PNP/UDP phosphorylase family. MtnN subfamily. In terms of assembly, homodimer.

It catalyses the reaction S-adenosyl-L-homocysteine + H2O = S-(5-deoxy-D-ribos-5-yl)-L-homocysteine + adenine. The enzyme catalyses S-methyl-5'-thioadenosine + H2O = 5-(methylsulfanyl)-D-ribose + adenine. The catalysed reaction is 5'-deoxyadenosine + H2O = 5-deoxy-D-ribose + adenine. It functions in the pathway amino-acid biosynthesis; L-methionine biosynthesis via salvage pathway; S-methyl-5-thio-alpha-D-ribose 1-phosphate from S-methyl-5'-thioadenosine (hydrolase route): step 1/2. Catalyzes the irreversible cleavage of the glycosidic bond in both 5'-methylthioadenosine (MTA) and S-adenosylhomocysteine (SAH/AdoHcy) to adenine and the corresponding thioribose, 5'-methylthioribose and S-ribosylhomocysteine, respectively. Also cleaves 5'-deoxyadenosine, a toxic by-product of radical S-adenosylmethionine (SAM) enzymes, into 5-deoxyribose and adenine. Thus, is required for in vivo function of the radical SAM enzymes biotin synthase and lipoic acid synthase, that are inhibited by 5'-deoxyadenosine accumulation. This Pectobacterium carotovorum subsp. carotovorum (strain PC1) protein is 5'-methylthioadenosine/S-adenosylhomocysteine nucleosidase.